A 308-amino-acid polypeptide reads, in one-letter code: Porphobilinogen deaminase (308 aa).

An S-(dipyrrolylmethanemethyl)cysteine modification is found at cysteine 241.

Belongs to the HMBS family. As to quaternary structure, monomer. The cofactor is dipyrromethane.

It catalyses the reaction 4 porphobilinogen + H2O = hydroxymethylbilane + 4 NH4(+). It functions in the pathway porphyrin-containing compound metabolism; protoporphyrin-IX biosynthesis; coproporphyrinogen-III from 5-aminolevulinate: step 2/4. Functionally, tetrapolymerization of the monopyrrole PBG into the hydroxymethylbilane pre-uroporphyrinogen in several discrete steps. The polypeptide is Porphobilinogen deaminase (Staphylococcus aureus (strain bovine RF122 / ET3-1)).